Here is an 885-residue protein sequence, read N- to C-terminus: MSTTAPEQNNPNHYHPQAIEAEQQAKWAADKRFEVSNDISKDANTRYMLSMFPYPSGKLHMGHVRNYTISDVLSRYYRLKGDQVLQPMGWDAFGMPAENAAIANQVAPAKWTFSNIDNMRAQLKTLGLSIDWSREFATCTPEYYRWEQWFFLQLYKKGLVYKKLATVNWDPVDNTVLANEQVVDGKGWRSGAPVEKRDIPMYYFKITDYADELLDDLDKLEGQWPSDVITMQRNWIGRSQGMEVHFPYKNSDDISTLDVFTTRPDTLMGVTYVAVAAEHRLAKLAAEKDPKIAEFCELCKKGSVAEADLAKAEKIGMDTGLTVTHPLTGEEVPVWVANYVLMSYGSGAVMAVPAHDERDFEFANKYNLPIKTVIKTPEDHEGAYTERGTLVNSGEFDGLDFDGSFEAMLAKLEPQKLAARKIQYRLRDWGVSRQRYWGCPIPMINCEYCGNVPVDEADLPIKLPTDVVPDGRGNPLKNIPEFVNTTCPKCGGPAERETDTFDTFMESSWYYARFASPNDDTQMVEKAAADKWLPVDQYVGGVEHAVMHLLYARFYHKLMRDEGLVSGDEPFKNLLTQGMVLAGTLYRDNPEGGKTYYFADDVEISYDDRGQPTQAILKADGQPVTIGKIEKMSKSKNNGVDPQTTIDQYGADTVRLYTLFAAPADQTLEWSDDSLKGPYNFLKKVWRETQSHLEATQELGLQVANLPAASSIDASQLDSLAKGLRRKTHEVITKIDNDLGERLSLNTPVSSLMELANEIGTFISKNQQINEHTLAVQHEALVTLLTLLSVYAPHIGEHLLEKLGVDTTRLRYPEADSAALVQDTITMVVQVNGKVRGKMEVAPGTDAESLKAQAKAIESVAKYLTGDIKKEIVVPNKLVNIVVAG.

The short motif at 53-63 is the 'HIGH' region element; sequence PYPSGKLHMGH. The 'KMSKS' region signature appears at 631–635; sequence KMSKS. K634 contributes to the ATP binding site.

This sequence belongs to the class-I aminoacyl-tRNA synthetase family.

It localises to the cytoplasm. It carries out the reaction tRNA(Leu) + L-leucine + ATP = L-leucyl-tRNA(Leu) + AMP + diphosphate. The protein is Leucine--tRNA ligase of Psychrobacter sp. (strain PRwf-1).